The following is a 765-amino-acid chain: Carboxysome assembly protein CsoS2 (765 aa).

Residues methionine 1 to lysine 22 are compositionally biased toward basic and acidic residues. Disordered regions lie at residues methionine 1 to valine 107 and arginine 165 to glycine 229. The interval methionine 1 to glutamine 215 is N-terminal domain. The stretch at arginine 7–lysine 22 is one N-repeat 1 repeat. The span at serine 38–proline 63 shows a compositional bias: polar residues. Basic and acidic residues predominate over residues serine 77–lysine 87. N-repeat repeat units follow at residues lysine 79 to lysine 94, arginine 158 to lysine 173, and arginine 196 to serine 211. Residues arginine 187 to serine 207 are compositionally biased toward basic and acidic residues. The segment at glycine 216–aspartate 586 is middle region. M-repeat repeat units follow at residues lysine 240–cysteine 289, arginine 300–cysteine 349, lysine 358–tyrosine 397, lysine 411–cysteine 460, lysine 470–cysteine 519, and arginine 530–cysteine 580. Disordered stretches follow at residues threonine 306 to proline 328 and glycine 367 to glycine 413. The tract at residues tyrosine 589–asparagine 734 is C-terminal domain. C-repeat repeat units lie at residues serine 604–glutamine 648 and lysine 677–serine 711. 2 disordered regions span residues glutamate 611–aspartate 637 and asparagine 656–glycine 765. Over residues aspartate 730–aspartate 741 the composition is skewed to basic and acidic residues. The tract at residues aspartate 735 to glycine 765 is C-terminal peptide.

Belongs to the CsoS2 family. In terms of assembly, probably interacts with the carboxysome major shell protein CsoS1 via the N-terminal domain. A CsoS1-CsoS1D-CsoS2 complex can be isolated following expression in E.coli. Interacts via its N-terminal repeats with RuBisCO. Post-translationally, unlike H.neapolitanus and predictions for P.marinus strain MIT 9313, this protein is not thought to have ribosomal frameshifting.

The protein localises to the carboxysome. Required for alpha-carboxysome (Cb) assembly, mediates interaction between RuBisCO and the Cb shell. The protein is probably highly flexible. The C-terminal repeats act as the encapsulation signal to target proteins to the Cb; they are necessary and sufficient to target both CsoS2 and foreign proteins to the Cb. The N-terminal repeats of this protein bind simultaneously to both subunits of RuBisCO. Probably also interacts with the major shell proteins (CsoS1); that interaction would increase the local concentration of CsoS2 so that it can condense RuBisCO and full carboxysomes can be formed. There are estimated to be 163 CsoS2 proteins per carboxysome; unlike H.neapolitanus only 1 form is seen. In Prochlorococcus marinus subsp. pastoris (strain CCMP1986 / NIES-2087 / MED4), this protein is Carboxysome assembly protein CsoS2.